The primary structure comprises 228 residues: Early nodulin-like protein 18 (228 aa).

The N-terminal stretch at 1–26 (MSPSCSSCVNVLLIMCLMLLSLSADA) is a signal peptide. One can recognise a Phytocyanin domain in the interval 28–148 (KNYTVGESTG…GQHFMINVTH (121 aa)). N-linked (GlcNAc...) asparagine glycans are attached at residues asparagine 29, asparagine 71, asparagine 94, and asparagine 145. An intrachain disulfide couples cysteine 86 to cysteine 136. Positions 148-211 (HGQGLPDSSS…VHSKKSSSST (64 aa)) are disordered. Positions 153–170 (PDSSSPDDAAAPGPSESS) are enriched in low complexity. Residues 188–204 (DHPKDIESADDDKEVHS) are compositionally biased toward basic and acidic residues. The GPI-anchor amidated serine moiety is linked to residue serine 204. Residues 205–228 (KKSSSSTTKTSLFCFVFMGLFASF) constitute a propeptide, removed in mature form.

The protein belongs to the early nodulin-like (ENODL) family. Mostly expressed in seedlings, roots and flowers, and, to a lower extent, in leaves, stems and seeds.

The protein resides in the cell membrane. In terms of biological role, may act as a carbohydrate transporter. In Arabidopsis thaliana (Mouse-ear cress), this protein is Early nodulin-like protein 18.